We begin with the raw amino-acid sequence, 211 residues long: Thymidylate kinase (211 aa).

11 to 18 (GPDGAGKT) is a binding site for ATP.

It belongs to the thymidylate kinase family.

The catalysed reaction is dTMP + ATP = dTDP + ADP. Its function is as follows. Phosphorylation of dTMP to form dTDP in both de novo and salvage pathways of dTTP synthesis. This chain is Thymidylate kinase, found in Streptococcus agalactiae serotype Ia (strain ATCC 27591 / A909 / CDC SS700).